The chain runs to 211 residues: Guanylate kinase (211 aa).

Residues 5–185 form the Guanylate kinase-like domain; that stretch reads GLLLILSSPS…AEEQLKMILS (181 aa). Position 12-19 (12-19) interacts with ATP; it reads SPSGAGKS.

It belongs to the guanylate kinase family.

The protein localises to the cytoplasm. It carries out the reaction GMP + ATP = GDP + ADP. Essential for recycling GMP and indirectly, cGMP. The sequence is that of Guanylate kinase from Cereibacter sphaeroides (strain ATCC 17023 / DSM 158 / JCM 6121 / CCUG 31486 / LMG 2827 / NBRC 12203 / NCIMB 8253 / ATH 2.4.1.) (Rhodobacter sphaeroides).